Reading from the N-terminus, the 211-residue chain is Adenylate kinase (211 aa).

13–18 provides a ligand contact to ATP; sequence GAGKGT. The tract at residues 33–62 is NMP; that stretch reads STGDILRVAVANKTKLGLEAKKFMDAGQLV. AMP-binding positions include threonine 34, arginine 39, 60–62, 88–91, and glutamine 95; these read QLV and GFPR. The tract at residues 129–161 is LID; sequence GRRTSKVTGKIYHIKFNPPVDEKPEDLVQRADD. Residues arginine 130 and 139 to 140 contribute to the ATP site; that span reads IY. AMP contacts are provided by arginine 158 and arginine 169. Residue lysine 197 coordinates ATP.

It belongs to the adenylate kinase family. As to quaternary structure, monomer.

The protein resides in the cytoplasm. It catalyses the reaction AMP + ATP = 2 ADP. Its pathway is purine metabolism; AMP biosynthesis via salvage pathway; AMP from ADP: step 1/1. Its function is as follows. Catalyzes the reversible transfer of the terminal phosphate group between ATP and AMP. Plays an important role in cellular energy homeostasis and in adenine nucleotide metabolism. The chain is Adenylate kinase from Fusobacterium nucleatum subsp. nucleatum (strain ATCC 25586 / DSM 15643 / BCRC 10681 / CIP 101130 / JCM 8532 / KCTC 2640 / LMG 13131 / VPI 4355).